Consider the following 513-residue polypeptide: uncharacterized protein (513 aa).

One can recognise a CYTH domain in the interval 11 to 219; it reads HLEVERKFDV…SKLARVLGAT (209 aa). Residues 228-506 form the CHAD domain; the sequence is PQPPADPVHR…LEAALRKLDK (279 aa).

This is an uncharacterized protein from Mycobacterium tuberculosis (strain CDC 1551 / Oshkosh).